A 39-amino-acid polypeptide reads, in one-letter code: Potassium channel toxin alpha-KTx 2.24 (39 aa).

3 disulfides stabilise this stretch: Cys-7/Cys-29, Cys-13/Cys-34, and Cys-17/Cys-36.

The protein belongs to the short scorpion toxin superfamily. Potassium channel inhibitor family. Alpha-KTx 02 subfamily. In terms of tissue distribution, expressed by the venom gland.

The protein resides in the secreted. Its function is as follows. Blocks human voltage-gated potassium (Kv) channels Kv1.1/KCNA, Kv1.2/KCNA2 and Kv1.3/KCNA3. Exhibits high affinity for Kv1.2/KCNA2 and selectivity over Kv1.1/KCNA and Kv1.3/KCNA3. The polypeptide is Potassium channel toxin alpha-KTx 2.24 (Centruroides bonito (Scorpion)).